Consider the following 210-residue polypeptide: Guanylate kinase (210 aa).

Residues glycine 5–glutamate 184 form the Guanylate kinase-like domain. Glycine 12–glycine 19 contributes to the ATP binding site.

This sequence belongs to the guanylate kinase family.

The protein resides in the cytoplasm. The catalysed reaction is GMP + ATP = GDP + ADP. Essential for recycling GMP and indirectly, cGMP. The polypeptide is Guanylate kinase (Streptococcus mutans serotype c (strain ATCC 700610 / UA159)).